We begin with the raw amino-acid sequence, 380 residues long: Alcohol dehydrogenase 1 (380 aa).

Zn(2+) is bound by residues C48, T50, H70, C100, C103, C106, C114, and C178. An alcohol-binding residues include T50 and H70. Residue T50 participates in NAD(+) binding. NAD(+) contacts are provided by residues G203 to G208, D227, R232, T273, V296, V296 to V298, F323, and R373.

It belongs to the zinc-containing alcohol dehydrogenase family. Homodimer. Homotetramer. It depends on Zn(2+) as a cofactor.

Its subcellular location is the cytoplasm. The enzyme catalyses a primary alcohol + NAD(+) = an aldehyde + NADH + H(+). The catalysed reaction is a secondary alcohol + NAD(+) = a ketone + NADH + H(+). The polypeptide is Alcohol dehydrogenase 1 (ADH1) (Solanum tuberosum (Potato)).